A 343-amino-acid chain; its full sequence is E3 ubiquitin-protein ligase RNF113A (343 aa).

An N-acetylalanine modification is found at alanine 2. The interval 2–60 (AEQLSPGKAVDQVCTFLFKKPGRKGAAGRRKRPACDPEPGESGSSSDEGCTVVRPEKKR) is important for interaction with SNRNP200/BRR2. Position 6 is a phosphoserine (serine 6). Positions 22–33 (PGRKGAAGRRKR) are enriched in basic residues. The segment at 22–96 (PGRKGAAGRR…EEEENEPESL (75 aa)) is disordered. Residues 41–50 (GESGSSSDEG) show a composition bias toward low complexity. Residues 50–61 (GCTVVRPEKKRV) are important for interaction with CXCR4. Residues serine 84 and serine 85 each carry the phosphoserine modification. Residues 84-93 (SSEEEEENEP) are compositionally biased toward acidic residues. The segment at 196–224 (DYQPDICKDYKETGFCGFGDSCKFLHDRS) adopts a C3H1-type zinc-finger fold. A Phosphoserine modification is found at serine 253. The RING-type zinc-finger motif lies at 262 to 300 (CFICRQSFQNPVVTKCRHYFCESCALQHFRTTPRCYVCD). The disordered stretch occupies residues 322 to 343 (ATGEGGASDLPEDPDEDAIPIT). Over residues 331-343 (LPEDPDEDAIPIT) the composition is skewed to acidic residues.

Component of pre-catalytic and catalytic spliceosome complexes. Interacts (via N-terminus) with the spliceosome subunit SNRNP200/BRR2. Component of the minor spliceosome, which splices U12-type introns. Within this complex, interacts with SCNM1 and CRIPT. In terms of tissue distribution, ubiquitous.

It is found in the nucleus. The protein localises to the nucleus speckle. It carries out the reaction S-ubiquitinyl-[E2 ubiquitin-conjugating enzyme]-L-cysteine + [acceptor protein]-L-lysine = [E2 ubiquitin-conjugating enzyme]-L-cysteine + N(6)-ubiquitinyl-[acceptor protein]-L-lysine.. It functions in the pathway protein modification; protein ubiquitination. In terms of biological role, required for pre-mRNA splicing as component of the spliceosome. As a component of the minor spliceosome, involved in the splicing of U12-type introns in pre-mRNAs. E3 ubiquitin-protein ligase that catalyzes the transfer of ubiquitin onto target proteins. Catalyzes polyubiquitination of SNRNP200/BRR2 with non-canonical 'Lys-63'-linked polyubiquitin chains. Plays a role in DNA repair via its role in the synthesis of 'Lys-63'-linked polyubiquitin chains that recruit ALKBH3 and the ASCC complex to sites of DNA damage by alkylating agents. Ubiquitinates CXCR4, leading to its degradation, and thereby contributes to the termination of CXCR4 signaling. The polypeptide is E3 ubiquitin-protein ligase RNF113A (RNF113A) (Homo sapiens (Human)).